A 262-amino-acid polypeptide reads, in one-letter code: Glutamate racemase (262 aa).

Substrate-binding positions include 5-6 and 37-38; these read DS and YG. Cysteine 69 functions as the Proton donor/acceptor in the catalytic mechanism. 70 to 71 lines the substrate pocket; the sequence is NT. The Proton donor/acceptor role is filled by cysteine 181. 182–183 is a substrate binding site; sequence TH.

This sequence belongs to the aspartate/glutamate racemases family.

It carries out the reaction L-glutamate = D-glutamate. The protein operates within cell wall biogenesis; peptidoglycan biosynthesis. Functionally, provides the (R)-glutamate required for cell wall biosynthesis. This Buchnera aphidicola subsp. Acyrthosiphon pisum (strain 5A) protein is Glutamate racemase.